Here is a 365-residue protein sequence, read N- to C-terminus: MHLNSNPNSYICDAYQHADLLWSLSPHVLTKAVQPQVTLLPTVNGSNPRYDGVDGHWPESPERSPCVAGIIPVIYYSVLLSLGLPVALARLAARTRKPSYHYLLALTASDIVTQVIIVFVGFLLQGAVLARQVPQAVVRTANILEFAANHASVWIAVLFTVDRYNALCRPLRHRATSSPGRTHRAIAAVIGVTLLTGIPFYWWLDVWRDADPPSTMDKLLKWAHCLIVYFIPCNVFLVTNSAIILRLRKRGQRGLRPLVSKSTAILLGVTSLFALLWAPRIIVMLYHLYVAPVHRDWRVHLALDIANMLAMLNTEVNFGLYCFISKTFRATVRQVICDVHMACALKSQPKQTVVELMLKSVGTEL.

At 1–66 (MHLNSNPNSY…WPESPERSPC (66 aa)) the chain is on the extracellular side. Asparagine 44 carries N-linked (GlcNAc...) asparagine glycosylation. The chain crosses the membrane as a helical span at residues 67-87 (VAGIIPVIYYSVLLSLGLPVA). Topologically, residues 88-102 (LARLAARTRKPSYHY) are cytoplasmic. Residues 103–123 (LLALTASDIVTQVIIVFVGFL) traverse the membrane as a helical segment. Residues 124-140 (LQGAVLARQVPQAVVRT) lie on the Extracellular side of the membrane. The chain crosses the membrane as a helical span at residues 141 to 161 (ANILEFAANHASVWIAVLFTV). Residues 162-185 (DRYNALCRPLRHRATSSPGRTHRA) lie on the Cytoplasmic side of the membrane. Residues 186-206 (IAAVIGVTLLTGIPFYWWLDV) traverse the membrane as a helical segment. The Extracellular portion of the chain corresponds to 207–224 (WRDADPPSTMDKLLKWAH). Residues 225–245 (CLIVYFIPCNVFLVTNSAIIL) form a helical membrane-spanning segment. Residues 246-264 (RLRKRGQRGLRPLVSKSTA) are Cytoplasmic-facing. The helical transmembrane segment at 265–285 (ILLGVTSLFALLWAPRIIVML) threads the bilayer. Over 286–304 (YHLYVAPVHRDWRVHLALD) the chain is Extracellular. The chain crosses the membrane as a helical span at residues 305–325 (IANMLAMLNTEVNFGLYCFIS). The Cytoplasmic segment spans residues 326-365 (KTFRATVRQVICDVHMACALKSQPKQTVVELMLKSVGTEL).

The protein belongs to the G-protein coupled receptor 1 family.

It localises to the cell membrane. Functionally, orphan receptor. This is Probable G-protein coupled receptor 142 (Gpr142) from Mus musculus (Mouse).